We begin with the raw amino-acid sequence, 253 residues long: Triosephosphate isomerase (253 aa).

Residue 8–10 (NWK) coordinates substrate. His93 functions as the Electrophile in the catalytic mechanism. The active-site Proton acceptor is the Glu165. Substrate is bound by residues Gly171, Ser210, and 231–232 (GG).

Belongs to the triosephosphate isomerase family. Homodimer.

It localises to the cytoplasm. The enzyme catalyses D-glyceraldehyde 3-phosphate = dihydroxyacetone phosphate. It participates in carbohydrate biosynthesis; gluconeogenesis. The protein operates within carbohydrate degradation; glycolysis; D-glyceraldehyde 3-phosphate from glycerone phosphate: step 1/1. In terms of biological role, involved in the gluconeogenesis. Catalyzes stereospecifically the conversion of dihydroxyacetone phosphate (DHAP) to D-glyceraldehyde-3-phosphate (G3P). This is Triosephosphate isomerase from Francisella tularensis subsp. novicida (strain U112).